Here is an 865-residue protein sequence, read N- to C-terminus: High affinity cAMP-specific and IBMX-insensitive 3',5'-cyclic phosphodiesterase 8B (865 aa).

Disordered regions lie at residues 17–40 (CRDS…TAPL) and 52–92 (AMPP…TCRG). Positions 23–36 (SNSPRQTSSVSQGP) are enriched in polar residues. Residues 75–90 (GSGSSTGSSGPATTTC) show a composition bias toward low complexity. The 72-residue stretch at 247–318 (ACNSVFTALD…DTINTCIKKG (72 aa)) folds into the PAS domain. Positions 373 to 415 (IHRDSGDNSQTEPHSFRHKSRRKESIDVKSISSRGSDAPSLQN) are disordered. Residues 402–415 (SISSRGSDAPSLQN) show a composition bias toward polar residues. Ser-497 carries the phosphoserine modification. Residues 519 to 855 (TINDVPPSIA…KHWKTLDDLK (337 aa)) form the PDEase domain. The Proton donor role is filled by His-595. Positions 599, 635, and 636 each coordinate a divalent metal cation. Ser-731 and Ser-734 each carry phosphoserine. Asp-761 is an a divalent metal cation binding site.

Belongs to the cyclic nucleotide phosphodiesterase family. PDE8 subfamily. The cofactor is a divalent metal cation. Widely expressed.

The enzyme catalyses 3',5'-cyclic AMP + H2O = AMP + H(+). Its pathway is purine metabolism; 3',5'-cyclic AMP degradation; AMP from 3',5'-cyclic AMP: step 1/1. Its function is as follows. Hydrolyzes the second messenger cAMP, which is a key regulator of many important physiological processes. May be involved in specific signaling in the thyroid gland. The polypeptide is High affinity cAMP-specific and IBMX-insensitive 3',5'-cyclic phosphodiesterase 8B (Pde8b) (Mus musculus (Mouse)).